An 855-amino-acid chain; its full sequence is MSFVRVNRCGPRVGVRKTPKVKKKKTSVKQEWDNTVTDLTVHRATPEDLVRRHEIHKSKNRALVHWELQEKALKRKWRKQKPETLNLEKRRLSIMKEILSDQYQMQDVLEKSDHLIAAAKELFPRRRTGFPNITVAPDSSQGPIVVNQDPITQSIFNESVIEPQALNDVDGEEEGTVTSQSGESENENELDNSLNSQSNTNTDRFLQQLTEENSELISKLWTDIQQKIVTQSQITPPGTPSSALSSGEQRAALNATNAVNRFQTRLQPEESTETLDSSYVVGHVLNSRKQKQLLNKVKRKPNLHALSKPKKNMLSGSTTSADLPNRTNSNLDVLKHMIHEVEHEMEEYERWTGREVKGLQSSQGLTGFTLSLVSSLCRLVRYLKESEIQLRKEVETRQQLEQVLGDHRELIDALTAEILRLREENAATQARLRQYMVTTDEQLISLTHAIKNCPVINNRQEIQASESGATGTRVMDSPEGPVVNANVSVPLMFREEVAEFPQEQLPVKLSQVPDPPDKMNLAKNFPAHIFEPAVLLTPPRQKSNLKFSPLQDVLRRTVQTRPAPRLLPTVEIIEKEQNWEEKTLPIDTDSQNSSEENRLFTQRWRVSHMGEDLENKTQAPFVNLSQPLCSSHSNTQQSRSPTFSEELPVLGDGQQLRTNESLIQRKDIMTRIADLTLQNSAIKAHMNNIIDPRGEQGDGLRELNKQESASDMTSTFPVAQSLTPGSMEERIAELNRQSMEARGKLLQLIEQQKLVGLNLSPPMSPVQLPLRAWTEGAKRTIEVSIPGAEAPESSKCSTVSPVSEINTRRSSGATSNSCSPLNATSGSGRFTPLNPRAKIEKQNEEGWFALSTHVS.

The tract at residues 164–200 (QALNDVDGEEEGTVTSQSGESENENELDNSLNSQSNT) is disordered. At T235 the chain carries Phosphothreonine. Residues 300-311 (KPNLHALSKPKK) are compositionally biased toward basic residues. Positions 300-328 (KPNLHALSKPKKNMLSGSTTSADLPNRTN) are disordered. Residues 314-328 (LSGSTTSADLPNRTN) are compositionally biased toward polar residues. Residues 325 to 437 (NRTNSNLDVL…TQARLRQYMV (113 aa)) adopt a coiled-coil conformation. A phosphoserine mark is found at S640 and S644. Residues 725–751 (GSMEERIAELNRQSMEARGKLLQLIEQ) adopt a coiled-coil conformation. Residues S760, S764, and S819 each carry the phosphoserine modification. Positions 789–834 (EAPESSKCSTVSPVSEINTRRSSGATSNSCSPLNATSGSGRFTPLN) are disordered. The segment covering 794-828 (SKCSTVSPVSEINTRRSSGATSNSCSPLNATSGSG) has biased composition (polar residues).

Interacts with CEP120.

It is found in the cytoplasm. It localises to the cytoskeleton. Its subcellular location is the microtubule organizing center. The protein localises to the centrosome. The protein resides in the centriole. It is found in the spindle. Its function is as follows. Regulator required for centriole duplication, for proper bipolar spindle formation and chromosome congression in mitosis. This Pongo abelii (Sumatran orangutan) protein is Spindle and centriole-associated protein 1 (SPICE1).